Here is a 1394-residue protein sequence, read N- to C-terminus: Kinesin-like protein KIF27 (1394 aa).

The region spanning 5–341 (PIKVAVRIRP…LKYANRARNI (337 aa)) is the Kinesin motor domain. An ATP-binding site is contributed by 84–91 (GQTGSGKT). 2 coiled-coil regions span residues 352 to 418 (QADR…IEQA) and 498 to 554 (QKDL…ELAK). Disordered regions lie at residues 559–582 (VPTS…RPHT) and 642–665 (FSDN…RSHS). The span at 571–580 (PDARASEKRP) shows a compositional bias: basic and acidic residues. Serine 643, serine 646, serine 672, serine 675, and serine 704 each carry phosphoserine. Coiled coils occupy residues 709 to 891 (LQKL…GQGE), 921 to 1078 (LDEQ…SIQS), 1118 to 1152 (NKVI…HELE), and 1186 to 1226 (DQDG…RLKD). Residues 886–916 (KAGQGEGLNPKAEDQDGFNLNRRKSPFRSGD) form a disordered region. Serine 999 carries the post-translational modification Phosphoserine. The segment covering 1267–1280 (TENTKLNGSEREVD) has biased composition (basic and acidic residues). Disordered regions lie at residues 1267 to 1319 (TENT…LQSI) and 1325 to 1344 (ARPF…PVRS). Polar residues-rich tracts occupy residues 1281-1295 (NSSS…TQQI) and 1309-1319 (IAPSSGQLQSI). A phosphoserine mark is found at serine 1365 and serine 1387.

Belongs to the TRAFAC class myosin-kinesin ATPase superfamily. Kinesin family. KIF27 subfamily. In terms of assembly, interacts with STK36.

It localises to the cytoplasm. It is found in the cytoskeleton. The protein resides in the cell projection. Its subcellular location is the cilium. In terms of biological role, plays an essential role in motile ciliogenesis. This Mus musculus (Mouse) protein is Kinesin-like protein KIF27 (Kif27).